An 87-amino-acid chain; its full sequence is Small ribosomal subunit protein bS20 (87 aa).

This sequence belongs to the bacterial ribosomal protein bS20 family.

In terms of biological role, binds directly to 16S ribosomal RNA. The sequence is that of Small ribosomal subunit protein bS20 from Alkaliphilus oremlandii (strain OhILAs) (Clostridium oremlandii (strain OhILAs)).